A 201-amino-acid polypeptide reads, in one-letter code: Ependymin-related protein 2 (201 aa).

Residues 1-21 (MILQVVLLLACLSGAIVSTGA) form the signal peptide. 2 N-linked (GlcNAc...) asparagine glycosylation sites follow: Asn-38 and Asn-137. The Microbody targeting signal motif lies at 199–201 (CRA).

Belongs to the ependymin family. Component of the acid-soluble and acid-insoluble organic matrix of calcified shell layers (at protein level).

It is found in the secreted. This chain is Ependymin-related protein 2, found in Haliotis asinina (Donkey's ear abalone).